A 515-amino-acid polypeptide reads, in one-letter code: 2-isopropylmalate synthase (515 aa).

A Pyruvate carboxyltransferase domain is found at 4–266 (IKFFDTTLRD…ETRLNLQEIK (263 aa)). Mn(2+) contacts are provided by Asp13, His201, His203, and Asn237. Positions 391 to 515 (QLSSIQVQYG…RAENEKVATS (125 aa)) are regulatory domain.

The protein belongs to the alpha-IPM synthase/homocitrate synthase family. LeuA type 1 subfamily. In terms of assembly, homodimer. Mn(2+) is required as a cofactor.

The protein localises to the cytoplasm. It carries out the reaction 3-methyl-2-oxobutanoate + acetyl-CoA + H2O = (2S)-2-isopropylmalate + CoA + H(+). It functions in the pathway amino-acid biosynthesis; L-leucine biosynthesis; L-leucine from 3-methyl-2-oxobutanoate: step 1/4. Catalyzes the condensation of the acetyl group of acetyl-CoA with 3-methyl-2-oxobutanoate (2-ketoisovalerate) to form 3-carboxy-3-hydroxy-4-methylpentanoate (2-isopropylmalate). The protein is 2-isopropylmalate synthase of Geobacillus stearothermophilus (Bacillus stearothermophilus).